The following is a 374-amino-acid chain: MPLLISRFAELDLIRQPEQQDEPLQAFDAADEYLLSHVAETGLSLDSRVLVLNDSFGALAASLARHANVVSSTDSFLAAQGLEKNLARNGMAYDAVPLIPASEPLSGPFDWVLIRIPKTLALLEEQLIRLQGQLAPGARVVAAAMVKHLPRSAGDLLEEYVGPVQASLAVKKARLLFATPRPQEVRTSPYPTRYTLDEPAIELLNHANVFCRDGLDIGTRALLPCLPKNLGAARVADLGCGNGVLAIASALENPDAHYTLVDESYMAVQSATENWRAHLGERDVVLRAADGLDTQQPDSLDVVLCNPPFHQQQVVGDFLAWRMFLQARAALVTGGALYIVGNRHLGYHTKLSRLFRGVEQVAATPKFVILKARK.

The protein belongs to the methyltransferase superfamily. RlmG family.

Its subcellular location is the cytoplasm. The catalysed reaction is guanosine(1835) in 23S rRNA + S-adenosyl-L-methionine = N(2)-methylguanosine(1835) in 23S rRNA + S-adenosyl-L-homocysteine + H(+). Functionally, specifically methylates the guanine in position 1835 (m2G1835) of 23S rRNA. The chain is Ribosomal RNA large subunit methyltransferase G from Pseudomonas syringae pv. tomato (strain ATCC BAA-871 / DC3000).